We begin with the raw amino-acid sequence, 447 residues long: Protein king tubby (447 aa).

The disordered stretch occupies residues 54 to 84 (GSPQNPDQILSNNSSSITMNSSRNNSNNMRS). A compositionally biased stretch (low complexity) spans 62-84 (ILSNNSSSITMNSSRNNSNNMRS). Residue serine 136 is modified to Phosphoserine. Over residues 168–182 (EGAAMEGSNGAANGS) the composition is skewed to low complexity. The disordered stretch occupies residues 168–191 (EGAAMEGSNGAANGSGSVGGSGES).

The protein belongs to the TUB family.

It localises to the cytoplasm. Its subcellular location is the nucleus. The protein localises to the cell projection. The protein resides in the cilium membrane. It is found in the rhabdomere. In Drosophila grimshawi (Hawaiian fruit fly), this protein is Protein king tubby.